The sequence spans 1121 residues: MSAPKKTYSSTTSAKSKHSVRVAQTTADAALEAVYEMSGDSGDSFDYSKSVGQSAESVPAGAVTAYLQRMQRGGLIQTFGCMVAVEEPNFCVIAYSENASEFLDLMPQAVPSMGEMDVLGIGTDIRTLFTPSSGAALEKAAATQDISLLNPITVHCRRSGKPLYAIAHRIDIGIVIDFEAVKMNDVSVSAAGALQSHKLAAKAITRLQALPGGDIGLLCDTVVEEVRELTGYDRVMAYKFHEDEHGEVVAEIRRMDLEPYLGLHYPATDIPQASRFLFMKNRVRVIADCCASPVKLIQDPDIKQPVSLAGSTLRAPHGCHAQYMGNMGSIASLVMAVIINDNEEDSRGAIQRGRKLWGLVVCHHTSPRTVPFPLRSACEFLMQVFGMQLNMEVELAAQLREKHILRTQTLLCDMLLRDAPIGIVSQTPNIMDLVKCDGAALYYGKRFWLLGTTPTENQIKDIAEWLLEYHKDSTGLSTDSLADANYPGAHLLGDAVCGMAAAKITAKDFLFWFRSHTAKEVKWGGAKHDPAEKDDGRKMHPRSSFKAFLEVVKRRSLPWEDVEMDAIHSLQLILRGSFQDIDDSDTKTMIHARLNDLKLHGMDELSVVANEMVRLIETATAPILAVDSTGMINGWNAKIAHVTGLPVSEAMGRSLVKDLVLDESVVVVERLLYLASQGEEEQNVEIKLKTFGTQTEKEAVILIVNACSSRDVSDSVVGVCFVGQDVTGQKMFMDKFTRIQGDYKTIVKNPHPLIPPIFGGDEYGYCFEWNPAMEALTGWKHDEVVGKLLVGEIFGMEMMCCRLKSQDSMTKFMISLNNAMDGTNTDKFSFSFCNREGKFVEALLSTNKRTNADGVITGVFCFLQIASSELQQALTVQRATEKVAIAKLKELAYIRQEIKNPLCGITFTRQLLEDTDLSDDQKQFLDTSAVCEQQLQKVLNDMDLESIEDGYLELDTAEFEMGTVMDAVISQGMTTSREKGLQIIRETPREISTMRLFGDQIRLQQVLSDFLINAIRFTPSSEGWVKIKVVPTRKRLGGNVHVMHLEFRVSHPGGGLPDELVLEMYDRAKGMTQEGLGLNMCRKLVRLMNGDVQYVRENAQCYFVVYVELPMAQRDDAASQM.

The GAF domain maps to 214-393 (DIGLLCDTVV…VFGMQLNMEV (180 aa)). Cysteine 319 contributes to the phytochromobilin binding site. PAS domains lie at 608-679 (VANE…SQGE) and 742-813 (DYKT…TKFM). Residues 893–1113 (YIRQEIKNPL…VVYVELPMAQ (221 aa)) enclose the Histidine kinase domain.

This sequence belongs to the phytochrome family. As to quaternary structure, homodimer. Contains one covalently linked phytochromobilin chromophore.

In terms of biological role, regulatory photoreceptor which exists in two forms that are reversibly interconvertible by light: the Pr form that absorbs maximally in the red region of the spectrum and the Pfr form that absorbs maximally in the far-red region. Photoconversion of Pr to Pfr induces an array of morphogenic responses, whereas reconversion of Pfr to Pr cancels the induction of those responses. Pfr controls the expression of a number of nuclear genes including those encoding the small subunit of ribulose-bisphosphate carboxylase, chlorophyll A/B binding protein, protochlorophyllide reductase, rRNA, etc. It also controls the expression of its own gene(s) in a negative feedback fashion. The polypeptide is Phytochrome 2 (PHY2) (Ceratodon purpureus (Fire moss)).